The following is a 480-amino-acid chain: Dihydrolipoyllysine-residue acetyltransferase component 4 of pyruvate dehydrogenase complex, chloroplastic (480 aa).

A chloroplast-targeting transit peptide spans 1 to 53; that stretch reads MAVSSSSFLSTASLTNSKSNISFASSVSPSLRSVVFRSTTPATSHRRSMTVRS. One can recognise a Lipoyl-binding domain in the interval 55-133; that stretch reads IREIFMPALS…AAIGLLAETE (79 aa). Lys96 carries the N6-lipoyllysine modification. Disordered regions lie at residues 140–168 and 224–245; these read KSKA…SPAP and AGIA…PVTA. Residues 142–156 show a composition bias toward low complexity; that stretch reads KAASKSSSSVAEAVV. The region spanning 187 to 224 is the Peripheral subunit-binding (PSBD) domain; that stretch reads VATPYAKKLAKQHKVDIESVAGTGPFGRITASDVETAA. Over residues 234 to 243 the composition is skewed to pro residues; that stretch reads APPPPPPPPV. Residue His453 is part of the active site.

The protein belongs to the 2-oxoacid dehydrogenase family. It depends on (R)-lipoate as a cofactor.

Its subcellular location is the plastid. It is found in the chloroplast stroma. The catalysed reaction is N(6)-[(R)-dihydrolipoyl]-L-lysyl-[protein] + acetyl-CoA = N(6)-[(R)-S(8)-acetyldihydrolipoyl]-L-lysyl-[protein] + CoA. Its function is as follows. The pyruvate dehydrogenase complex catalyzes the overall conversion of pyruvate to acetyl-CoA and CO(2). It contains multiple copies of three enzymatic components: pyruvate dehydrogenase (E1), dihydrolipoamide acetyltransferase (E2) and lipoamide dehydrogenase (E3). The chain is Dihydrolipoyllysine-residue acetyltransferase component 4 of pyruvate dehydrogenase complex, chloroplastic (LTA2) from Arabidopsis thaliana (Mouse-ear cress).